Here is a 595-residue protein sequence, read N- to C-terminus: Merlin (595 aa).

Phosphoserine is present on Ser-13. The 290-residue stretch at Phe-22 to Arg-311 folds into the FERM domain. Phosphoserine; by PAK is present on Ser-518.

As to quaternary structure, interacts with NHERF1, HGS and AGAP2. Interacts with LAYN. Interacts with SGSM3. Interacts (via FERM domain) with MPP1. Interacts with WWC1. Interacts with the CUL4A-RBX1-DDB1-VprBP/DCAF1 E3 ubiquitin-protein ligase complex. The unphosphorylated form interacts (via FERM domain) with VPRBP/DCAF1. Interacts (via FERM domain) with NOP53; the interaction is direct. Interacts with SCHIP1; the interaction is direct. In terms of processing, phosphorylation of Ser-518 inhibits nuclear localization by disrupting the intramolecular association of the FERM domain with the C-terminal tail. The dephosphorylation of Ser-518 favors the interaction with NOP53. Ubiquitinated by the CUL4A-RBX1-DDB1-DCAF1/VprBP E3 ubiquitin-protein ligase complex for ubiquitination and subsequent proteasome-dependent degradation. In terms of tissue distribution, widely expressed. Isoform 1 and isoform 3 are predominant. Isoform 4, isoform 5 and isoform 6 are expressed moderately. Isoform 8 is found at low frequency. Isoform 7, isoform 9 and isoform 10 are not expressed in adult tissues, with the exception of adult retina expressing isoform 10. Isoform 9 is faintly expressed in fetal brain, heart, lung, skeletal muscle and spleen. Fetal thymus expresses isoforms 1, 7, 9 and 10 at similar levels.

Its subcellular location is the cell projection. The protein resides in the filopodium membrane. It is found in the ruffle membrane. It localises to the nucleus. The protein localises to the cytoplasm. Its subcellular location is the perinuclear region. The protein resides in the cytoplasmic granule. It is found in the cytoskeleton. Probable regulator of the Hippo/SWH (Sav/Wts/Hpo) signaling pathway, a signaling pathway that plays a pivotal role in tumor suppression by restricting proliferation and promoting apoptosis. Along with WWC1 can synergistically induce the phosphorylation of LATS1 and LATS2 and can probably function in the regulation of the Hippo/SWH (Sav/Wts/Hpo) signaling pathway. May act as a membrane stabilizing protein. May inhibit PI3 kinase by binding to AGAP2 and impairing its stimulating activity. Suppresses cell proliferation and tumorigenesis by inhibiting the CUL4A-RBX1-DDB1-VprBP/DCAF1 E3 ubiquitin-protein ligase complex. The chain is Merlin (NF2) from Homo sapiens (Human).